The sequence spans 315 residues: MMELINNRGMRDWMIFIKVAEVGNLSRAARELDISISAVSKSLSRLENSIEVTLLRRDSHHLELTGAGQTAYASMKRITSSFQSLLDELRNPDKIIRGSIKFSAPAIVCEFLANKWIWEFTASYPDTKIYLDSRERSDFFSKSLEFDELVFKSGIIESEDLVYRKISPLKLVLCASPKYIRKYGRISHPGDLENHIIVGLHNHGLSGPLTLFRQDESYTISGAVNVHLSSNNLLSVLNLVLEGKGINLMTPAWLATKYLKNNELEIILPEWRVPDLPIYLVWRHRQYYSPLFQRFLSFIEDKWNNRPQIDFLNDD.

The HTH lysR-type domain maps to Arg8–Thr65. The segment at residues Leu25 to Ser44 is a DNA-binding region (H-T-H motif).

The protein belongs to the LysR transcriptional regulatory family.

Probable regulatory protein. Its target is not known. This Salmonella typhimurium (strain LT2 / SGSC1412 / ATCC 700720) protein is Probable HTH-type transcriptional regulator SinR (sinR).